The following is a 177-amino-acid chain: Protein-export protein SecB (177 aa).

The interval 1 to 22 (MSDENNSGAAAPEAQNPGQNAA) is disordered. Residues 8-22 (GAAAPEAQNPGQNAA) are compositionally biased toward low complexity.

It belongs to the SecB family. Homotetramer, a dimer of dimers. One homotetramer interacts with 1 SecA dimer.

The protein localises to the cytoplasm. Functionally, one of the proteins required for the normal export of preproteins out of the cell cytoplasm. It is a molecular chaperone that binds to a subset of precursor proteins, maintaining them in a translocation-competent state. It also specifically binds to its receptor SecA. In Paracoccus denitrificans (strain Pd 1222), this protein is Protein-export protein SecB.